The sequence spans 771 residues: Ribonucleoside-diphosphate reductase large subunit (771 aa).

The ATP-cone domain occupies 1 to 92 (MFVIKRNGYK…VSNLHKETKK (92 aa)). ATP contacts are provided by residues 5 to 6 (KR), 11 to 17 (ENVMFDK), threonine 53, aspartate 57, and lysine 88. GDP is bound by residues serine 202 and serine 217. Residues 226-228 (DSI), lysine 243, and arginine 256 each bind dTTP. GDP is bound at residue asparagine 427. Catalysis depends on asparagine 427, which acts as the Proton acceptor. The active-site Cysteine radical intermediate is the cysteine 429. GDP is bound by residues glutamate 431 and 603 to 606 (TAST). The Proton acceptor role is filled by glutamate 431.

It belongs to the ribonucleoside diphosphate reductase large chain family. As to quaternary structure, interacts with RNR2/OPG047 subunit. Mg(2+) is required as a cofactor.

It catalyses the reaction a 2'-deoxyribonucleoside 5'-diphosphate + [thioredoxin]-disulfide + H2O = a ribonucleoside 5'-diphosphate + [thioredoxin]-dithiol. Functionally, ribonucleoside-diphosphate reductase holoenzyme provides the precursors necessary for viral DNA synthesis. Allows virus growth in non-dividing cells. Catalyzes the biosynthesis of deoxyribonucleotides from the corresponding ribonucleotides. The sequence is that of Ribonucleoside-diphosphate reductase large subunit (OPG080) from Homo sapiens (Human).